Reading from the N-terminus, the 358-residue chain is Membrane-bound lytic murein transglycosylase C (358 aa).

An N-terminal signal peptide occupies residues 1–16 (MKKILALLVIAPLLIS). A lipid anchor (N-palmitoyl cysteine) is attached at Cys17. Cys17 carries S-diacylglycerol cysteine lipidation.

Belongs to the transglycosylase Slt family.

It is found in the cell outer membrane. The catalysed reaction is Exolytic cleavage of the (1-&gt;4)-beta-glycosidic linkage between N-acetylmuramic acid (MurNAc) and N-acetylglucosamine (GlcNAc) residues in peptidoglycan, from either the reducing or the non-reducing ends of the peptidoglycan chains, with concomitant formation of a 1,6-anhydrobond in the MurNAc residue.. In terms of biological role, murein-degrading enzyme. May play a role in recycling of muropeptides during cell elongation and/or cell division. This chain is Membrane-bound lytic murein transglycosylase C, found in Serratia proteamaculans (strain 568).